A 429-amino-acid chain; its full sequence is Glutamate-1-semialdehyde 2,1-aminomutase 2 (429 aa).

K268 carries the N6-(pyridoxal phosphate)lysine modification.

Belongs to the class-III pyridoxal-phosphate-dependent aminotransferase family. HemL subfamily. In terms of assembly, homodimer. Pyridoxal 5'-phosphate is required as a cofactor.

The protein localises to the cytoplasm. It catalyses the reaction (S)-4-amino-5-oxopentanoate = 5-aminolevulinate. Its pathway is porphyrin-containing compound metabolism; protoporphyrin-IX biosynthesis; 5-aminolevulinate from L-glutamyl-tRNA(Glu): step 2/2. The polypeptide is Glutamate-1-semialdehyde 2,1-aminomutase 2 (Staphylococcus aureus (strain bovine RF122 / ET3-1)).